Here is a 271-residue protein sequence, read N- to C-terminus: Ribosomal RNA small subunit methyltransferase A (271 aa).

Positions 11, 13, 38, 58, 86, and 101 each coordinate S-adenosyl-L-methionine.

This sequence belongs to the class I-like SAM-binding methyltransferase superfamily. rRNA adenine N(6)-methyltransferase family. RsmA subfamily.

The protein resides in the cytoplasm. It catalyses the reaction adenosine(1518)/adenosine(1519) in 16S rRNA + 4 S-adenosyl-L-methionine = N(6)-dimethyladenosine(1518)/N(6)-dimethyladenosine(1519) in 16S rRNA + 4 S-adenosyl-L-homocysteine + 4 H(+). Specifically dimethylates two adjacent adenosines (A1518 and A1519) in the loop of a conserved hairpin near the 3'-end of 16S rRNA in the 30S particle. May play a critical role in biogenesis of 30S subunits. The chain is Ribosomal RNA small subunit methyltransferase A from Helicobacter pylori (strain G27).